A 422-amino-acid chain; its full sequence is Monoacylglycerol lipase ABHD2 (422 aa).

The Cytoplasmic segment spans residues 1-15 (MSAQLEADVRTMSPE). Residues 16–36 (MPAMFDGMKLAAVAAVLYVIV) form a helical; Signal-anchor for type II membrane protein membrane-spanning segment. At 37-422 (RSLNLKCPTA…HKPQCHQQKE (386 aa)) the chain is on the extracellular side. The AB hydrolase-1 domain maps to 134–385 (MVICPGIGNH…HGGHLGFFEG (252 aa)). The N-linked (GlcNAc...) asparagine glycan is linked to N142. Residue S213 is the Nucleophile of the active site. N-linked (GlcNAc...) asparagine glycosylation is found at N285, N335, and N344. Catalysis depends on charge relay system residues D348 and H379.

Belongs to the AB hydrolase superfamily. AB hydrolase 4 family.

It is found in the cell membrane. The catalysed reaction is Hydrolyzes glycerol monoesters of long-chain fatty acids.. The enzyme catalyses an acetyl ester + H2O = an aliphatic alcohol + acetate + H(+). It carries out the reaction a triacylglycerol + H2O = a diacylglycerol + a fatty acid + H(+). It catalyses the reaction 2-(5Z,8Z,11Z,14Z-eicosatetraenoyl)-glycerol + H2O = glycerol + (5Z,8Z,11Z,14Z)-eicosatetraenoate + H(+). The catalysed reaction is a butanoate ester + H2O = an aliphatic alcohol + butanoate + H(+). The enzyme catalyses hexadecanoate ester + H2O = an aliphatic alcohol + hexadecanoate + H(+). Its activity is regulated as follows. Acylglycerol lipase activity is activated upon binding to progesterone. In terms of biological role, progesterone-dependent acylglycerol lipase that catalyzes hydrolysis of endocannabinoid arachidonoylglycerol (AG) from cell membrane. Acts as a progesterone receptor: progesterone-binding activates the acylglycerol lipase activity, mediating degradation of 1-arachidonoylglycerol (1AG) and 2-arachidonoylglycerol (2AG) to glycerol and arachidonic acid (AA). Also displays an ester hydrolase activity against acetyl ester, butanoate ester and hexadecanoate ester. Plays a key role in sperm capacitation in response to progesterone by mediating degradation of 2AG, an inhibitor of the sperm calcium channel CatSper, leading to calcium influx via CatSper and sperm activation. May also play a role in smooth muscle cells migration. The sequence is that of Monoacylglycerol lipase ABHD2 (abhd2b) from Danio rerio (Zebrafish).